A 703-amino-acid chain; its full sequence is Polyribonucleotide nucleotidyltransferase (703 aa).

Positions 484 and 490 each coordinate Mg(2+). The KH domain maps to 551-610 (PTVTTLRVLPEKISVIIGPAGKNIKKIIEETGVKIDLDPTGLVKIYATSKIAAEKAIDMI). One can recognise an S1 motif domain in the interval 620-688 (GEVYLGKVTR…DQGRIKVSLK (69 aa)).

Belongs to the polyribonucleotide nucleotidyltransferase family. Mg(2+) serves as cofactor.

The protein resides in the cytoplasm. It catalyses the reaction RNA(n+1) + phosphate = RNA(n) + a ribonucleoside 5'-diphosphate. In terms of biological role, involved in mRNA degradation. Catalyzes the phosphorolysis of single-stranded polyribonucleotides processively in the 3'- to 5'-direction. This chain is Polyribonucleotide nucleotidyltransferase, found in Sulfurihydrogenibium sp. (strain YO3AOP1).